Here is an 85-residue protein sequence, read N- to C-terminus: UPF0512 protein U (85 aa).

Belongs to the UPF0512 family.

This Dictyostelium discoideum (Social amoeba) protein is UPF0512 protein U.